The following is a 158-amino-acid chain: Transcriptional regulator MraZ (158 aa).

SpoVT-AbrB domains follow at residues 7-54 and 84-127; these read NIEA…PEEV and VEII…AKER.

It belongs to the MraZ family. Forms oligomers.

It localises to the cytoplasm. The protein resides in the nucleoid. This Bacteroides fragilis (strain ATCC 25285 / DSM 2151 / CCUG 4856 / JCM 11019 / LMG 10263 / NCTC 9343 / Onslow / VPI 2553 / EN-2) protein is Transcriptional regulator MraZ.